A 240-amino-acid polypeptide reads, in one-letter code: Sugar fermentation stimulation protein homolog (240 aa).

It belongs to the SfsA family.

The protein is Sugar fermentation stimulation protein homolog of Saccharolobus islandicus (strain M.16.4 / Kamchatka #3) (Sulfolobus islandicus).